A 295-amino-acid chain; its full sequence is Nucleotide-binding protein RBAM_031990 (295 aa).

16 to 23 (GMSGAGKT) contacts ATP. Position 67–70 (67–70 (DLRG)) interacts with GTP.

The protein belongs to the RapZ-like family.

Functionally, displays ATPase and GTPase activities. The chain is Nucleotide-binding protein RBAM_031990 from Bacillus velezensis (strain DSM 23117 / BGSC 10A6 / LMG 26770 / FZB42) (Bacillus amyloliquefaciens subsp. plantarum).